The chain runs to 275 residues: Esterase AAEL000016 (275 aa).

The interval 1-21 (MMANETAAKSTKSSPTPAVEP) is disordered. The segment covering 7 to 16 (AAKSTKSSPT) has biased composition (polar residues). Active-site charge relay system residues include serine 129, aspartate 187, and histidine 214. A disordered region spans residues 253-275 (LVDDSGPAGNGVHDDDDDDDDSD). Residues 266 to 275 (DDDDDDDDSD) show a composition bias toward acidic residues.

It belongs to the LovG family.

This is Esterase AAEL000016 from Aedes aegypti (Yellowfever mosquito).